We begin with the raw amino-acid sequence, 402 residues long: MDTKAFKRSLQHSENYNRKGFGHQAEVATQLQSEYQSNLIQEIRDRNYILQRGDVTIRLAQAFGFCWGVERAVAMAYETRQHFPTEHIWITNEIIHNPSVNQRMQEMEVEFIPIEGKNKDFSVVGTGDVVILPAFGASVQEMQILHDKGCKIVDTTCPWVSKVWNTVEKHKKIDYTSIIHGKYKHEETVATSSFAGKYLIVLNLQEAQYVADYIINGGNREEFLTKFAKACSAGFDPDRDLERVGIANQTTMLKDETEQIGKLFERTMLQKYSPIELNQHFQSFNTICDATQERQDAMLELVEHNLNLMVVIGGFNSSNTTQLQQIAFERRIPSYHIDTVERIKSGDSIEHRQLNGQLITTENWLPDGEIVVGITSGASTPDKVVEDVIEKIFAVKATAALV.

C66 is a binding site for [4Fe-4S] cluster. Residue H96 participates in (2E)-4-hydroxy-3-methylbut-2-enyl diphosphate binding. H96 serves as a coordination point for dimethylallyl diphosphate. H96 provides a ligand contact to isopentenyl diphosphate. Position 157 (C157) interacts with [4Fe-4S] cluster. Residue H185 coordinates (2E)-4-hydroxy-3-methylbut-2-enyl diphosphate. Residue H185 coordinates dimethylallyl diphosphate. Residue H185 participates in isopentenyl diphosphate binding. Catalysis depends on E187, which acts as the Proton donor. T250 is a (2E)-4-hydroxy-3-methylbut-2-enyl diphosphate binding site. C288 serves as a coordination point for [4Fe-4S] cluster. S317, S318, N319, and S379 together coordinate (2E)-4-hydroxy-3-methylbut-2-enyl diphosphate. Residues S317, S318, N319, and S379 each coordinate dimethylallyl diphosphate. The isopentenyl diphosphate site is built by S317, S318, N319, and S379.

The protein belongs to the IspH family. It depends on [4Fe-4S] cluster as a cofactor.

It carries out the reaction isopentenyl diphosphate + 2 oxidized [2Fe-2S]-[ferredoxin] + H2O = (2E)-4-hydroxy-3-methylbut-2-enyl diphosphate + 2 reduced [2Fe-2S]-[ferredoxin] + 2 H(+). It catalyses the reaction dimethylallyl diphosphate + 2 oxidized [2Fe-2S]-[ferredoxin] + H2O = (2E)-4-hydroxy-3-methylbut-2-enyl diphosphate + 2 reduced [2Fe-2S]-[ferredoxin] + 2 H(+). Its pathway is isoprenoid biosynthesis; dimethylallyl diphosphate biosynthesis; dimethylallyl diphosphate from (2E)-4-hydroxy-3-methylbutenyl diphosphate: step 1/1. It functions in the pathway isoprenoid biosynthesis; isopentenyl diphosphate biosynthesis via DXP pathway; isopentenyl diphosphate from 1-deoxy-D-xylulose 5-phosphate: step 6/6. Catalyzes the conversion of 1-hydroxy-2-methyl-2-(E)-butenyl 4-diphosphate (HMBPP) into a mixture of isopentenyl diphosphate (IPP) and dimethylallyl diphosphate (DMAPP). Acts in the terminal step of the DOXP/MEP pathway for isoprenoid precursor biosynthesis. This Nostoc punctiforme (strain ATCC 29133 / PCC 73102) protein is 4-hydroxy-3-methylbut-2-enyl diphosphate reductase.